Reading from the N-terminus, the 726-residue chain is Replication restart protein PriA (726 aa).

I234 provides a ligand contact to ATP. One can recognise a Helicase ATP-binding domain in the interval 234–373; the sequence is IQSVLYKGVQ…LHRKCFYIKL (140 aa). Residues 316–319 carry the DEAH box motif; that stretch reads LEEH. The Zn(2+) site is built by C431, C434, C440, C443, C458, C461, C471, and C474.

It belongs to the helicase family. PriA subfamily. As to quaternary structure, component of the replication restart primosome. The cofactor is Zn(2+).

The catalysed reaction is Couples ATP hydrolysis with the unwinding of duplex DNA by translocating in the 3'-5' direction.. It carries out the reaction ATP + H2O = ADP + phosphate + H(+). Initiates the restart of stalled replication forks, which reloads the replicative helicase on sites other than the origin of replication. Recognizes and binds to abandoned replication forks and remodels them to uncover a helicase loading site. Promotes assembly of the primosome at these replication forks. This Buchnera aphidicola subsp. Acyrthosiphon pisum (strain APS) (Acyrthosiphon pisum symbiotic bacterium) protein is Replication restart protein PriA.